The following is a 430-amino-acid chain: Adenylosuccinate synthetase (430 aa).

Residues 13–19 (GDEGKGK) and 41–43 (GHT) contribute to the GTP site. The active-site Proton acceptor is the aspartate 14. Aspartate 14 and glycine 41 together coordinate Mg(2+). IMP contacts are provided by residues 14–17 (DEGK), 39–42 (NAGH), threonine 130, arginine 144, glutamine 225, threonine 240, and arginine 304. The Proton donor role is filled by histidine 42. 300 to 306 (ASTGRPR) is a binding site for substrate. GTP-binding positions include arginine 306, 332–334 (KLD), and 414–416 (STG).

It belongs to the adenylosuccinate synthetase family. As to quaternary structure, homodimer. Mg(2+) is required as a cofactor.

Its subcellular location is the cytoplasm. It catalyses the reaction IMP + L-aspartate + GTP = N(6)-(1,2-dicarboxyethyl)-AMP + GDP + phosphate + 2 H(+). The protein operates within purine metabolism; AMP biosynthesis via de novo pathway; AMP from IMP: step 1/2. Plays an important role in the de novo pathway of purine nucleotide biosynthesis. Catalyzes the first committed step in the biosynthesis of AMP from IMP. The polypeptide is Adenylosuccinate synthetase (Xanthomonas axonopodis pv. citri (strain 306)).